The chain runs to 166 residues: Protein C (166 aa).

The disordered stretch occupies residues 17–42 (YKRHTDDQASNNQVPKTGQEHGRTSC).

Its function is as follows. May counteract the cellular interferon antiviral system. The sequence is that of Protein C (P/V/C) from Hendra virus (isolate Horse/Autralia/Hendra/1994).